Reading from the N-terminus, the 500-residue chain is Endothelial lipase (500 aa).

Positions 1–20 (MSNSVPLLCFWSLCYCFAAG) are cleaved as a signal peptide. Cys64 and Cys77 are oxidised to a cystine. Residues Asn80 and Asn136 are each glycosylated (N-linked (GlcNAc...) asparagine). Ser169 serves as the catalytic Nucleophile. Asp193 serves as the catalytic Charge relay system. An intrachain disulfide couples Cys252 to Cys272. His274 acts as the Charge relay system in catalysis. Disulfide bonds link Cys297–Cys316 and Cys308–Cys311. 325–337 (KMRNKRNSKMYLK) contributes to the heparin binding site. Positions 347–482 (YHYQMKIHVF…SPGRELWFRK (136 aa)) constitute a PLAT domain. Residues Asn393, Asn469, and Asn491 are each glycosylated (N-linked (GlcNAc...) asparagine). A disulfide bond links Cys463 and Cys483.

The protein belongs to the AB hydrolase superfamily. Lipase family. Head to tail homodimer. As to expression, high level of expression in the liver, placenta, lung, thyroid, kidney, testis and in the corpus luteum of the ovary. Expressed also in coronary artery endothelial cells, umbilical vein endothelial cells and in hepatocytes and osteosarcoma cell lines. Not detected in heart, brain and muscle.

It localises to the secreted. The enzyme catalyses a triacylglycerol + H2O = a diacylglycerol + a fatty acid + H(+). The catalysed reaction is a 1,2-diacyl-sn-glycero-3-phosphocholine + H2O = a 2-acyl-sn-glycero-3-phosphocholine + a fatty acid + H(+). It catalyses the reaction 1,2,3-tri-(9Z-octadecenoyl)-glycerol + H2O = di-(9Z)-octadecenoylglycerol + (9Z)-octadecenoate + H(+). It carries out the reaction 1,2,3-tributanoylglycerol + H2O = dibutanoylglycerol + butanoate + H(+). The enzyme catalyses 1,2-dihexadecanoyl-sn-glycero-3-phosphocholine + H2O = hexadecanoyl-sn-glycero-3-phosphocholine + hexadecanoate + H(+). Its activity is regulated as follows. Inhibited by serum and NaCl. Exerts both phospholipase and triglyceride lipase activities. More active as a phospholipase than a triglyceride lipase. Hydrolyzes triglycerides, both with short-chain fatty acyl groups (tributyrin) and long-chain fatty acyl groups (triolein) with similar levels of activity toward both types of substrates. Hydrolyzes high density lipoproteins (HDL) more efficiently than other lipoproteins. The chain is Endothelial lipase (LIPG) from Homo sapiens (Human).